Consider the following 458-residue polypeptide: Phenylalanine-specific permease (458 aa).

Residues 1–27 lie on the Cytoplasmic side of the membrane; it reads MKNASTVSEDTASNQEPTLHRGLHNRH. A helical transmembrane segment spans residues 28–48; that stretch reads IQLIALGGAIGTGLFLGIGPA. Residues 49-50 lie on the Periplasmic side of the membrane; the sequence is IQ. Residues 51-71 traverse the membrane as a helical segment; sequence MAGPAVLLGYGVAGIIAFLIM. Topologically, residues 72–105 are cytoplasmic; sequence RQLGEMVVEEPVSGSFAHFAYKYWGPFAGFLSGW. A helical membrane pass occupies residues 106-126; that stretch reads NYWVMFVLVGMAELTAAGIYM. Over 127-132 the chain is Periplasmic; that stretch reads QYWFPD. A helical transmembrane segment spans residues 133–153; that stretch reads VPTWIWAAAFFIIINAVNLVN. Over 154-160 the chain is Cytoplasmic; sequence VRLYGET. A helical membrane pass occupies residues 161 to 181; that stretch reads EFWFALIKVLAIIGMIGFGLW. The Periplasmic portion of the chain corresponds to 182–196; sequence LLFSGHGGEKASIDN. The helical transmembrane segment at 197-217 threads the bilayer; that stretch reads LWRYGGFFATGWNGLILSLAV. Over 218 to 250 the chain is Cytoplasmic; that stretch reads IMFSFGGLELIGITAAEARDPEKSIPKAVNQVV. A helical membrane pass occupies residues 251–271; it reads YRILLFYIGSLVVLLALYPWV. The Periplasmic portion of the chain corresponds to 272-288; sequence EVKSNSSPFVMIFHNLD. Residues 289–309 traverse the membrane as a helical segment; that stretch reads SNVVASALNFVILVASLSVYN. At 310 to 341 the chain is on the cytoplasmic side; sequence SGVYSNSRMLFGLSVQGNAPKFLTRVSRRGVP. Residues 342–362 form a helical membrane-spanning segment; it reads INSLMLSGAITSLVVLINYLL. Residues 363-367 lie on the Periplasmic side of the membrane; the sequence is PQKAF. A helical membrane pass occupies residues 368–388; the sequence is GLLMALVVATLLLNWIMICLA. Residues 389–411 are Cytoplasmic-facing; it reads HLRFRAAMRRQGRETQFKALLYP. Residues 412-432 form a helical membrane-spanning segment; that stretch reads FGNYLCIAFLGMILLLMCTMD. Topologically, residues 433-434 are periplasmic; sequence DM. A helical transmembrane segment spans residues 435–455; it reads RLSAILLPVWIVFLFMAFKTL. Over 456 to 458 the chain is Cytoplasmic; sequence RRK.

This sequence belongs to the amino acid-polyamine-organocation (APC) superfamily. Amino acid transporter (AAT) (TC 2.A.3.1) family.

It is found in the cell inner membrane. It carries out the reaction L-phenylalanine(in) + H(+)(in) = L-phenylalanine(out) + H(+)(out). Its function is as follows. Permease that is involved in the active transport across the cytoplasmic membrane of phenylalanine. Can also transport tyrosine, but not tryptophan. In Escherichia coli (strain K12), this protein is Phenylalanine-specific permease.